The following is a 1529-amino-acid chain: ATP-dependent permease PDR15 (1529 aa).

Basic and acidic residues predominate over residues 1-13 (MSSDIRDVEERNS). The tract at residues 1–38 (MSSDIRDVEERNSRSSSSSSSSNSAAQSIGQHPYRGFD) is disordered. At 1-531 (MSSDIRDVEE…NFWRMKQSAS (531 aa)) the chain is on the cytoplasmic side. Over residues 14-24 (RSSSSSSSSNS) the composition is skewed to low complexity. The ABC transporter 1 domain maps to 171–420 (LRLLKPSKEE…FQDMGYYCPP (250 aa)). The helical transmembrane segment at 532–552 (VTLWQVIGNSVMAFILGSMFY) threads the bilayer. Residues 553–567 (KVMKKNDTSTFYFRG) are Extracellular-facing. A glycan (N-linked (GlcNAc...) asparagine) is linked at N558. Residues 568-588 (AAMFFAILFNAFSCLLEIFSL) form a helical membrane-spanning segment. Residues 589-617 (YETRPITEKHRTYSLYHPSADAFASVLSE) are Cytoplasmic-facing. The helical transmembrane segment at 618-638 (MPPKLITAVCFNIIFYFLVDF) threads the bilayer. Over 639-642 (RRNG) the chain is Extracellular. The chain crosses the membrane as a helical span at residues 643-663 (GVFFFYFLINVIATFTLSHLF). Topologically, residues 664–699 (RCVGSLTKTLQEAMVPASMLLLAISMYTGFAIPKTK) are cytoplasmic. The chain crosses the membrane as a helical span at residues 700–720 (ILGWSIWIWYINPLAYLFESL). Residues 721–783 (MINEFHDRRF…YDYEHKHKWR (63 aa)) lie on the Extracellular side of the membrane. N744 is a glycosylation site (N-linked (GlcNAc...) asparagine). The chain crosses the membrane as a helical span at residues 784–804 (GFGIGMAYVVFFFFVYLILCE). Residues 805–1219 (YNEGAKQKGE…LFQQYWRSPD (415 aa)) are Cytoplasmic-facing. A compositionally biased stretch (basic and acidic residues) spans 829 to 840 (EGKLQEKHRPGD). A disordered region spans residues 829–873 (EGKLQEKHRPGDIENNAGSSPDSATTEKKILDDSSEGSDSSSDNA). Positions 884-1127 (FHWRDLCYDV…MIDYFESKGA (244 aa)) constitute an ABC transporter 2 domain. 920-927 (GASGAGKT) is an ATP binding site. A helical membrane pass occupies residues 1220 to 1240 (YLWSKFILTIFNQVFIGFTFF). The Extracellular segment spans residues 1241–1312 (KADRSLQGLQ…VEIPWNILAG (72 aa)). Residues 1313-1333 (TIAYCIYYYAVGFYANASAAG) form a helical membrane-spanning segment. Residues 1334 to 1340 (QLHERGA) lie on the Cytoplasmic side of the membrane. The chain crosses the membrane as a helical span at residues 1341-1361 (LFWLFSIAFYVYIGSMGLLMI). Over 1362–1368 (SFNEVAE) the chain is Extracellular. Residues 1369–1389 (TAAHMGTLLFTMALSFCGVMA) traverse the membrane as a helical segment. Residues 1390–1396 (TPKVMPR) are Cytoplasmic-facing. A helical membrane pass occupies residues 1397 to 1417 (FWIFMYRVSPLTYMIDALLAL). The Extracellular segment spans residues 1418 to 1492 (GVANVDVKCS…SSHYYRRWRN (75 aa)). Residues 1493–1513 (YGIFICYIAFDYIAATFLYWL) traverse the membrane as a helical segment. At 1514–1529 (SRVPKKNGKISEKPKK) the chain is on the cytoplasmic side.

This sequence belongs to the ABC transporter superfamily. ABCG family. PDR (TC 3.A.1.205) subfamily.

The protein localises to the membrane. The polypeptide is ATP-dependent permease PDR15 (PDR15) (Saccharomyces cerevisiae (strain ATCC 204508 / S288c) (Baker's yeast)).